The primary structure comprises 156 residues: Large ribosomal subunit protein uL13 (156 aa).

This sequence belongs to the universal ribosomal protein uL13 family. In terms of assembly, part of the 50S ribosomal subunit.

Functionally, this protein is one of the early assembly proteins of the 50S ribosomal subunit, although it is not seen to bind rRNA by itself. It is important during the early stages of 50S assembly. The sequence is that of Large ribosomal subunit protein uL13 from Archaeoglobus fulgidus (strain ATCC 49558 / DSM 4304 / JCM 9628 / NBRC 100126 / VC-16).